The sequence spans 1232 residues: DNA-directed RNA polymerase subunit beta (1232 aa).

Positions 1170 to 1232 are disordered; sequence SVDEDADELE…LDLDDFGDEH (63 aa). Positions 1171 to 1180 are enriched in acidic residues; that stretch reads VDEDADELEV. Residues 1189–1198 show a composition bias toward basic and acidic residues; it reads PEEKEEKEKE. The segment covering 1199-1232 has biased composition (acidic residues); it reads DSDEYDDLREEDVEPDLEELSLDDLDLDDFGDEH.

This sequence belongs to the RNA polymerase beta chain family. In terms of assembly, the RNAP catalytic core consists of 2 alpha, 1 beta, 1 beta' and 1 omega subunit. When a sigma factor is associated with the core the holoenzyme is formed, which can initiate transcription.

It carries out the reaction RNA(n) + a ribonucleoside 5'-triphosphate = RNA(n+1) + diphosphate. Functionally, DNA-dependent RNA polymerase catalyzes the transcription of DNA into RNA using the four ribonucleoside triphosphates as substrates. The chain is DNA-directed RNA polymerase subunit beta from Clostridium botulinum (strain Okra / Type B1).